Here is a 119-residue protein sequence, read N- to C-terminus: Large ribosomal subunit protein bL19 (119 aa).

The protein belongs to the bacterial ribosomal protein bL19 family.

Functionally, this protein is located at the 30S-50S ribosomal subunit interface and may play a role in the structure and function of the aminoacyl-tRNA binding site. The polypeptide is Large ribosomal subunit protein bL19 (Pseudarthrobacter chlorophenolicus (strain ATCC 700700 / DSM 12829 / CIP 107037 / JCM 12360 / KCTC 9906 / NCIMB 13794 / A6) (Arthrobacter chlorophenolicus)).